The chain runs to 260 residues: Ribonuclease 3 (260 aa).

Residues 1–24 (MAQSSKYQRKPRSGERKRSQRRLE) form a disordered region. Residues 12 to 24 (RSGERKRSQRRLE) are compositionally biased toward basic and acidic residues. Residues 33–162 (FDDLLVRTGL…FIGALYMDQG (130 aa)) enclose the RNase III domain. Glu-75 provides a ligand contact to Mg(2+). The active site involves Asp-79. Asp-148 and Glu-151 together coordinate Mg(2+). Glu-151 is a catalytic residue. The DRBM domain maps to 188-257 (DFKSQLQEFV…AKQALLALNQ (70 aa)).

This sequence belongs to the ribonuclease III family. Homodimer. Mg(2+) serves as cofactor.

Its subcellular location is the cytoplasm. The enzyme catalyses Endonucleolytic cleavage to 5'-phosphomonoester.. In terms of biological role, digests double-stranded RNA. Involved in the processing of primary rRNA transcript to yield the immediate precursors to the large and small rRNAs (23S and 16S). Processes some mRNAs, and tRNAs when they are encoded in the rRNA operon. Processes pre-crRNA and tracrRNA of type II CRISPR loci if present in the organism. This is Ribonuclease 3 from Shouchella clausii (strain KSM-K16) (Alkalihalobacillus clausii).